The following is a 571-amino-acid chain: Urease subunit alpha (571 aa).

The 439-residue stretch at 133 to 571 (GGIDTHIHFV…LPLAQRYFLF (439 aa)) folds into the Urease domain. The Ni(2+) site is built by His-138, His-140, and Lys-221. Lys-221 is modified (N6-carboxylysine). His-223 contacts substrate. Residues His-250 and His-276 each coordinate Ni(2+). His-324 (proton donor) is an active-site residue. A Ni(2+)-binding site is contributed by Asp-364.

The protein belongs to the metallo-dependent hydrolases superfamily. Urease alpha subunit family. In terms of assembly, heterotrimer of UreA (gamma), UreB (beta) and UreC (alpha) subunits. Three heterotrimers associate to form the active enzyme. Ni cation is required as a cofactor. Carboxylation allows a single lysine to coordinate two nickel ions.

It is found in the cytoplasm. It carries out the reaction urea + 2 H2O + H(+) = hydrogencarbonate + 2 NH4(+). Its pathway is nitrogen metabolism; urea degradation; CO(2) and NH(3) from urea (urease route): step 1/1. The sequence is that of Urease subunit alpha from Anaeromyxobacter sp. (strain K).